The sequence spans 960 residues: Chromo domain-containing protein 1 (960 aa).

The region spanning 22–74 (YEVEDILADRVNKNGINEYYIKWAGYDWYDNTWEPEQNLFGAEKVLKKWKKRK) is the Chromo domain.

In terms of assembly, ago1, chp1 and tas3 interact to form the core of the RNA-induced transcriptional silencing (RITS) complex. The RITS complex interacts with the RDRC complex via interaction between ago1 and hrr1. Clr4 has a role in mediating this interaction. Interacts with dri1.

The protein resides in the nucleus. It localises to the cytoplasm. The protein localises to the cytoskeleton. Its subcellular location is the microtubule organizing center. It is found in the spindle pole body. Functionally, component of the kinetochore which plays a role in stabilizing microtubules and so allowing accurate chromosome segregation. Has a role in the RNA interference (RNAi) pathway which is important for heterochromatin formation and accurate chromosome segregation. A member of the RNA-induced transcriptional silencing (RITS) complex which is involved in the biosynthesis of dsRNA from primer siRNAs provided by the RNA-directed RNA polymerase (RDRC) complex. In Schizosaccharomyces pombe (strain 972 / ATCC 24843) (Fission yeast), this protein is Chromo domain-containing protein 1.